Reading from the N-terminus, the 208-residue chain is Small ribosomal subunit protein uS4 (208 aa).

An S4 RNA-binding domain is found at 98 to 178 (SRLDNVVYRM…RPKWLEYDAE (81 aa)).

This sequence belongs to the universal ribosomal protein uS4 family. In terms of assembly, part of the 30S ribosomal subunit. Contacts protein S5. The interaction surface between S4 and S5 is involved in control of translational fidelity.

Its function is as follows. One of the primary rRNA binding proteins, it binds directly to 16S rRNA where it nucleates assembly of the body of the 30S subunit. In terms of biological role, with S5 and S12 plays an important role in translational accuracy. The sequence is that of Small ribosomal subunit protein uS4 from Acetivibrio thermocellus (strain ATCC 27405 / DSM 1237 / JCM 9322 / NBRC 103400 / NCIMB 10682 / NRRL B-4536 / VPI 7372) (Clostridium thermocellum).